Reading from the N-terminus, the 968-residue chain is Putative pectinesterase/pectinesterase inhibitor 26 (968 aa).

Residues isoleucine 33–isoleucine 53 form a helical membrane-spanning segment. The pectinesterase inhibitor 26 A stretch occupies residues leucine 71–isoleucine 230. 10 N-linked (GlcNAc...) asparagine glycosylation sites follow: asparagine 101, asparagine 158, asparagine 219, asparagine 295, asparagine 352, asparagine 400, asparagine 464, asparagine 541, asparagine 559, and asparagine 603. Positions leucine 265 to isoleucine 430 are pectinesterase inhibitor 26 B. The interval proline 453–isoleucine 614 is pectinesterase inhibitor 26 C. Residues histidine 660–aspartate 954 are pectinesterase 26. Residue threonine 735 participates in substrate binding. N-linked (GlcNAc...) asparagine glycosylation is present at asparagine 737. Glutamine 765 is a substrate binding site. Aspartate 788 functions as the Proton donor; for pectinesterase activity in the catalytic mechanism. Cysteine 802 and cysteine 822 are oxidised to a cystine. The active-site Nucleophile; for pectinesterase activity is the aspartate 809. Asparagine 863 carries N-linked (GlcNAc...) asparagine glycosylation. Arginine 872 and tryptophan 874 together coordinate substrate. N-linked (GlcNAc...) asparagine glycosylation is present at asparagine 900.

This sequence in the N-terminal section; belongs to the PMEI family. It in the C-terminal section; belongs to the pectinesterase family. As to expression, expressed in flowers.

It is found in the membrane. It carries out the reaction [(1-&gt;4)-alpha-D-galacturonosyl methyl ester](n) + n H2O = [(1-&gt;4)-alpha-D-galacturonosyl](n) + n methanol + n H(+). The protein operates within glycan metabolism; pectin degradation; 2-dehydro-3-deoxy-D-gluconate from pectin: step 1/5. Acts in the modification of cell walls via demethylesterification of cell wall pectin. This Arabidopsis thaliana (Mouse-ear cress) protein is Putative pectinesterase/pectinesterase inhibitor 26 (PME26).